We begin with the raw amino-acid sequence, 324 residues long: Mitochondrial oxaloacetate transport protein (324 aa).

Solcar repeat units follow at residues 20 to 111 (ISKF…IRSS), 126 to 218 (QSVG…AKNI), and 227 to 312 (DGPA…TMKL). 6 helical membrane passes run 26–46 (FVAG…IELI), 79–99 (GIKG…GLNG), 132–152 (VFSG…LFLV), 193–213 (GIDA…PIYN), 233–253 (LTAS…WDVI), and 284–305 (LYKG…CLTF).

This sequence belongs to the mitochondrial carrier (TC 2.A.29) family.

It is found in the mitochondrion inner membrane. The catalysed reaction is a dicarboxylate(in) + sulfate(out) = a dicarboxylate(out) + sulfate(in). It catalyses the reaction (2S)-2-isopropylmalate(in) + sulfate(out) = (2S)-2-isopropylmalate(out) + sulfate(in). The enzyme catalyses (2R,3S)-3-isopropylmalate(in) + sulfate(out) = (2R,3S)-3-isopropylmalate(out) + sulfate(in). It carries out the reaction malonate(in) + sulfate(out) = malonate(out) + sulfate(in). The catalysed reaction is oxaloacetate(in) + sulfate(out) = oxaloacetate(out) + sulfate(in). It catalyses the reaction thiosulfate(in) + sulfate(out) = thiosulfate(out) + sulfate(in). Its activity is regulated as follows. Inhibited by alpha-keto isocaproate, an intermediate of leucine biosynthesis pathway. Functionally, antiporter that exchanges dicarboxylates and sulfur oxoanions across the inner membrane of mitochondria. Exports alpha-isopropylmalate from mitochondrial matrix to the cytosol, where it serves as a precursor for leucine biosynthesis. In Saccharomyces cerevisiae (strain ATCC 204508 / S288c) (Baker's yeast), this protein is Mitochondrial oxaloacetate transport protein (OAC1).